The following is a 104-amino-acid chain: Transcription initiation factor IIA subunit 2 (104 aa).

It belongs to the TFIIA subunit 2 family. As to quaternary structure, TFIIA is a heterodimer of the large unprocessed subunit 1 and a small subunit gamma.

The protein localises to the nucleus. Its function is as follows. TFIIA is a component of the transcription machinery of RNA polymerase II and plays an important role in transcriptional activation. TFIIA in a complex with TBP mediates transcriptional activity. The chain is Transcription initiation factor IIA subunit 2 from Schistosoma mansoni (Blood fluke).